A 347-amino-acid polypeptide reads, in one-letter code: Lipoyl synthase (347 aa).

Positions 55, 60, 66, 81, 85, 88, and 292 each coordinate [4Fe-4S] cluster. Positions 67-281 constitute a Radical SAM core domain; that stretch reads WEDREATFLI…RDYGHDIGFA (215 aa).

Belongs to the radical SAM superfamily. Lipoyl synthase family. It depends on [4Fe-4S] cluster as a cofactor.

It localises to the cytoplasm. The enzyme catalyses [[Fe-S] cluster scaffold protein carrying a second [4Fe-4S](2+) cluster] + N(6)-octanoyl-L-lysyl-[protein] + 2 oxidized [2Fe-2S]-[ferredoxin] + 2 S-adenosyl-L-methionine + 4 H(+) = [[Fe-S] cluster scaffold protein] + N(6)-[(R)-dihydrolipoyl]-L-lysyl-[protein] + 4 Fe(3+) + 2 hydrogen sulfide + 2 5'-deoxyadenosine + 2 L-methionine + 2 reduced [2Fe-2S]-[ferredoxin]. Its pathway is protein modification; protein lipoylation via endogenous pathway; protein N(6)-(lipoyl)lysine from octanoyl-[acyl-carrier-protein]: step 2/2. Functionally, catalyzes the radical-mediated insertion of two sulfur atoms into the C-6 and C-8 positions of the octanoyl moiety bound to the lipoyl domains of lipoate-dependent enzymes, thereby converting the octanoylated domains into lipoylated derivatives. This is Lipoyl synthase from Corynebacterium kroppenstedtii (strain DSM 44385 / JCM 11950 / CIP 105744 / CCUG 35717).